Reading from the N-terminus, the 146-residue chain is Hemoglobin subunit beta-0 (146 aa).

The region spanning 2–146 is the Globin domain; the sequence is EWTDFERATI…VVSSLGRQYH (145 aa). Heme b is bound by residues His-63 and His-92.

It belongs to the globin family. Heterotetramer of two alpha chains and two beta chains. As to expression, red blood cells.

Functionally, involved in oxygen transport from gills to the various peripheral tissues. In Pagothenia borchgrevinki (Bald rockcod), this protein is Hemoglobin subunit beta-0 (hbb0).